A 203-amino-acid polypeptide reads, in one-letter code: Thymidine kinase (203 aa).

ATP contacts are provided by residues 21–28 (GCMFAGKT) and 99–102 (DEIQ). Residue glutamate 100 is the Proton acceptor of the active site. Residues cysteine 156, cysteine 159, cysteine 194, and cysteine 197 each coordinate Zn(2+).

Belongs to the thymidine kinase family. In terms of assembly, homotetramer.

The protein resides in the cytoplasm. The enzyme catalyses thymidine + ATP = dTMP + ADP + H(+). This Mesoplasma florum (strain ATCC 33453 / NBRC 100688 / NCTC 11704 / L1) (Acholeplasma florum) protein is Thymidine kinase.